The primary structure comprises 458 residues: Bifunctional protein GlmU (458 aa).

A pyrophosphorylase region spans residues 1-232 (MISPLSVIIL…TFEIEGVNNR (232 aa)). UDP-N-acetyl-alpha-D-glucosamine contacts are provided by residues 10–13 (LAAG), K24, Q79, 84–85 (GT), 106–108 (YGD), G142, E157, N172, and N230. Mg(2+) is bound at residue D108. N230 contacts Mg(2+). The segment at 233–253 (QQLASLERTWQGKLVADLQEA) is linker. Residues 254–458 (GVQFADPTRV…KDNFQRPTKK (205 aa)) are N-acetyltransferase. Residues R336 and K354 each coordinate UDP-N-acetyl-alpha-D-glucosamine. Residue H366 is the Proton acceptor of the active site. 2 residues coordinate UDP-N-acetyl-alpha-D-glucosamine: Y369 and N380. Residues A383, 389 to 390 (NY), S408, A426, and R443 contribute to the acetyl-CoA site.

In the N-terminal section; belongs to the N-acetylglucosamine-1-phosphate uridyltransferase family. It in the C-terminal section; belongs to the transferase hexapeptide repeat family. In terms of assembly, homotrimer. Mg(2+) serves as cofactor.

Its subcellular location is the cytoplasm. It carries out the reaction alpha-D-glucosamine 1-phosphate + acetyl-CoA = N-acetyl-alpha-D-glucosamine 1-phosphate + CoA + H(+). The catalysed reaction is N-acetyl-alpha-D-glucosamine 1-phosphate + UTP + H(+) = UDP-N-acetyl-alpha-D-glucosamine + diphosphate. It functions in the pathway nucleotide-sugar biosynthesis; UDP-N-acetyl-alpha-D-glucosamine biosynthesis; N-acetyl-alpha-D-glucosamine 1-phosphate from alpha-D-glucosamine 6-phosphate (route II): step 2/2. The protein operates within nucleotide-sugar biosynthesis; UDP-N-acetyl-alpha-D-glucosamine biosynthesis; UDP-N-acetyl-alpha-D-glucosamine from N-acetyl-alpha-D-glucosamine 1-phosphate: step 1/1. Its pathway is bacterial outer membrane biogenesis; LPS lipid A biosynthesis. Its function is as follows. Catalyzes the last two sequential reactions in the de novo biosynthetic pathway for UDP-N-acetylglucosamine (UDP-GlcNAc). The C-terminal domain catalyzes the transfer of acetyl group from acetyl coenzyme A to glucosamine-1-phosphate (GlcN-1-P) to produce N-acetylglucosamine-1-phosphate (GlcNAc-1-P), which is converted into UDP-GlcNAc by the transfer of uridine 5-monophosphate (from uridine 5-triphosphate), a reaction catalyzed by the N-terminal domain. In Psychrobacter arcticus (strain DSM 17307 / VKM B-2377 / 273-4), this protein is Bifunctional protein GlmU.